The primary structure comprises 475 residues: Ribulose bisphosphate carboxylase large chain (475 aa).

The propeptide occupies 1–2; it reads MS. Pro-3 carries the N-acetylproline modification. N6,N6,N6-trimethyllysine is present on Lys-14. Substrate is bound by residues Asn-123 and Thr-173. Lys-175 (proton acceptor) is an active-site residue. Lys-177 serves as a coordination point for substrate. Residues Lys-201, Asp-203, and Glu-204 each coordinate Mg(2+). Lys-201 carries the post-translational modification N6-carboxylysine. His-294 (proton acceptor) is an active-site residue. Substrate is bound by residues Arg-295, His-327, and Ser-379.

The protein belongs to the RuBisCO large chain family. Type I subfamily. In terms of assembly, heterohexadecamer of 8 large chains and 8 small chains; disulfide-linked. The disulfide link is formed within the large subunit homodimers. It depends on Mg(2+) as a cofactor. Post-translationally, the disulfide bond which can form in the large chain dimeric partners within the hexadecamer appears to be associated with oxidative stress and protein turnover.

It is found in the plastid. The protein resides in the chloroplast. It catalyses the reaction 2 (2R)-3-phosphoglycerate + 2 H(+) = D-ribulose 1,5-bisphosphate + CO2 + H2O. It carries out the reaction D-ribulose 1,5-bisphosphate + O2 = 2-phosphoglycolate + (2R)-3-phosphoglycerate + 2 H(+). In terms of biological role, ruBisCO catalyzes two reactions: the carboxylation of D-ribulose 1,5-bisphosphate, the primary event in carbon dioxide fixation, as well as the oxidative fragmentation of the pentose substrate in the photorespiration process. Both reactions occur simultaneously and in competition at the same active site. This is Ribulose bisphosphate carboxylase large chain from Anthoceros angustus (Hornwort).